The sequence spans 444 residues: Adenylosuccinate synthetase (444 aa).

GTP contacts are provided by residues 13 to 19 (GDEGKGK) and 41 to 43 (GHT). Asp-14 serves as the catalytic Proton acceptor. Residues Asp-14 and Gly-41 each coordinate Mg(2+). IMP contacts are provided by residues 14-17 (DEGK), 39-42 (NAGH), Thr-129, Arg-143, Gln-224, Thr-239, and Arg-303. The Proton donor role is filled by His-42. 299–305 (TTTGRRR) is a binding site for substrate. GTP-binding positions include Arg-305, 331–333 (KLD), and 413–415 (SLG).

The protein belongs to the adenylosuccinate synthetase family. In terms of assembly, homodimer. Mg(2+) serves as cofactor.

The protein resides in the cytoplasm. The enzyme catalyses IMP + L-aspartate + GTP = N(6)-(1,2-dicarboxyethyl)-AMP + GDP + phosphate + 2 H(+). Its pathway is purine metabolism; AMP biosynthesis via de novo pathway; AMP from IMP: step 1/2. In terms of biological role, plays an important role in the de novo pathway of purine nucleotide biosynthesis. Catalyzes the first committed step in the biosynthesis of AMP from IMP. This is Adenylosuccinate synthetase from Synechocystis sp. (strain ATCC 27184 / PCC 6803 / Kazusa).